Reading from the N-terminus, the 382-residue chain is Gap junction alpha-1 protein (382 aa).

Residues 2 to 23 (GDWSALGKLLDKVQAYSTAGGK) are Cytoplasmic-facing. Ser5 bears the Phosphoserine mark. Residues 24-44 (VWLSVLFIFRILLLGTAVESA) form a helical membrane-spanning segment. Topologically, residues 45–76 (WGDEQSAFRCNTQQPGCENVCYDKSFPISHVR) are extracellular. 2 disulfide bridges follow: Cys54-Cys192 and Cys187-Cys198. Residues 77-97 (FWVLQIIFVSVPTLLYLAHVF) traverse the membrane as a helical segment. Topologically, residues 98–155 (YVMRKEEKLNKKEEELKVAQTDGVNVEMHLKQIEIKKFKYGIEEHGKVKMRGGLLRTY) are cytoplasmic. Lys144 participates in a covalent cross-link: Glycyl lysine isopeptide (Lys-Gly) (interchain with G-Cter in SUMO). The helical transmembrane segment at 156–176 (IISILFKSVFEVAFLLIQWYI) threads the bilayer. Topologically, residues 177 to 207 (YGFSLSAVYTCKRDPCPHQVDCFLSRPTEKT) are extracellular. A helical membrane pass occupies residues 208 to 228 (IFIIFMLVVSLVSLALNIIEL). At 229–382 (FYAFFKGVKD…SRPRPDDLEI (154 aa)) the chain is on the cytoplasmic side. Residue Lys237 forms a Glycyl lysine isopeptide (Lys-Gly) (interchain with G-Cter in SUMO) linkage. The interaction with NOV stretch occupies residues 244–382 (SDPYHATTGP…SRPRPDDLEI (139 aa)). Tyr247 bears the Phosphotyrosine mark. Ser255, Ser257, and Ser262 each carry phosphoserine. Residues 264-382 (KYAYFNGCSS…SRPRPDDLEI (119 aa)) form an interaction with UBQLN4 region. Position 271 is an S-nitrosocysteine (Cys271). Thr275 carries the phosphothreonine modification. Ser306 and Ser314 each carry phosphoserine. A compositionally biased stretch (polar residues) spans 317 to 332 (QNRMGQAGSTISNSHA). The tract at residues 317–382 (QNRMGQAGST…SRPRPDDLEI (66 aa)) is disordered. Residue Ser325 is modified to Phosphoserine; by CK1. Thr326 is modified (phosphothreonine). Phosphoserine; by CK1 is present on residues Ser328 and Ser330. The span at 342–351 (QNSKKLDAGH) shows a compositional bias: basic and acidic residues. A phosphoserine mark is found at Ser344 and Ser365. Residues 362–374 (RPSSRASSRASSR) show a composition bias toward low complexity. Ser368 carries the phosphoserine; by PKC/PRKCG and PKC/PRKCD modification. 2 positions are modified to phosphoserine: Ser369 and Ser373.

This sequence belongs to the connexin family. Alpha-type (group II) subfamily. As to quaternary structure, a connexon is composed of a hexamer of connexins. Interacts with SGSM3. Interacts with RIC1/CIP150. Interacts with CNST and CSNK1D. Interacts (via C-terminus) with TJP1. Interacts (via C-terminus) with SRC (via SH3 domain). Interacts (not ubiquitinated) with UBQLN4 (via UBA domain). Interacts with NOV. Interacts with TMEM65. Interacts with ANK3/ANKG and PKP2. Phosphorylation at Ser-325, Ser-328 and Ser-330 by CK1 modulates gap junction assembly. Phosphorylated at Ser-368 by PRKCG; phosphorylation induces disassembly of gap junction plaques and inhibition of gap junction activity. Phosphorylation at Ser-368 by PRKCD triggers its internalization into small vesicles leading to proteasome-mediated degradation. Post-translationally, sumoylated with SUMO1, SUMO2 and SUMO3, which may regulate the level of functional Cx43 gap junctions at the plasma membrane. May be desumoylated by SENP1 or SENP2. In terms of processing, S-nitrosylation at Cys-271 is enriched at the muscle endothelial gap junction in arteries, it augments channel permeability and may regulate of smooth muscle cell to endothelial cell communication. Acetylated in the developing cortex; leading to delocalization from the cell membrane.

The protein resides in the cell membrane. The protein localises to the cell junction. It is found in the gap junction. It localises to the endoplasmic reticulum. Gap junction protein that acts as a regulator of bladder capacity. A gap junction consists of a cluster of closely packed pairs of transmembrane channels, the connexons, through which materials of low MW diffuse from one cell to a neighboring cell. May play a critical role in the physiology of hearing by participating in the recycling of potassium to the cochlear endolymph. Negative regulator of bladder functional capacity: acts by enhancing intercellular electrical and chemical transmission, thus sensitizing bladder muscles to cholinergic neural stimuli and causing them to contract. May play a role in cell growth inhibition through the regulation of NOV expression and localization. Plays an essential role in gap junction communication in the ventricles. The sequence is that of Gap junction alpha-1 protein (GJA1) from Sus scrofa (Pig).